The sequence spans 197 residues: Molybdenum cofactor guanylyltransferase (197 aa).

GTP-binding positions include 10–12, K23, N51, D69, and D99; that span reads LAG. D99 contacts Mg(2+).

The protein belongs to the MobA family. In terms of assembly, monomer. Mg(2+) serves as cofactor.

The protein localises to the cytoplasm. It carries out the reaction Mo-molybdopterin + GTP + H(+) = Mo-molybdopterin guanine dinucleotide + diphosphate. Transfers a GMP moiety from GTP to Mo-molybdopterin (Mo-MPT) cofactor (Moco or molybdenum cofactor) to form Mo-molybdopterin guanine dinucleotide (Mo-MGD) cofactor. This chain is Molybdenum cofactor guanylyltransferase, found in Shewanella sp. (strain MR-4).